Here is a 404-residue protein sequence, read N- to C-terminus: MKLPIYLDYSATTPVDPRVAQKMADCLLVDGNFGNPASRSHVFGWKAEEAVENGRRQVAELINADPREIVWTSGATESDNLALKGVAHFYQTKGKHIITSKIEHKAVLDTARQLEREGFEVTYLEPGEDGIVTPAMVEAVLRDDTILVSLMHVNNEVGSINDIAAIGELTRSRGVLFHVDAAQSAGKVEIDLQKLKVDLMSFSAHKVYGPKGIGALYVSRKPRVRLEAIIHGGGHERGMRSGTLPTHQIVGMGEAFAIAKQEMVAENARIKALSDRFFKQVSDLEELYVNGSQTARVPHNLNLSFNYVEGESLLMSLKDIAVSSGSACTSASLEPSYVLRALGRNDELAHSSIRFSFGRFTTEEEVDYAAQKVCEAVNKLRELSPLWDMYKDGVDISKIEWAAH.

Pyridoxal 5'-phosphate is bound by residues 75–76 (AT), N155, Q183, and 203–205 (SAH). K206 is subject to N6-(pyridoxal phosphate)lysine. T243 provides a ligand contact to pyridoxal 5'-phosphate. C328 (cysteine persulfide intermediate) is an active-site residue. C328 provides a ligand contact to [2Fe-2S] cluster.

It belongs to the class-V pyridoxal-phosphate-dependent aminotransferase family. NifS/IscS subfamily. In terms of assembly, homodimer. Forms a heterotetramer with IscU, interacts with other sulfur acceptors. It depends on pyridoxal 5'-phosphate as a cofactor.

Its subcellular location is the cytoplasm. The enzyme catalyses (sulfur carrier)-H + L-cysteine = (sulfur carrier)-SH + L-alanine. It participates in cofactor biosynthesis; iron-sulfur cluster biosynthesis. Its function is as follows. Master enzyme that delivers sulfur to a number of partners involved in Fe-S cluster assembly, tRNA modification or cofactor biosynthesis. Catalyzes the removal of elemental sulfur atoms from cysteine to produce alanine. Functions as a sulfur delivery protein for Fe-S cluster synthesis onto IscU, an Fe-S scaffold assembly protein, as well as other S acceptor proteins. This is Cysteine desulfurase IscS from Pseudomonas putida (strain GB-1).